Reading from the N-terminus, the 688-residue chain is Two-component response regulator ORR23 (688 aa).

One can recognise a Response regulatory domain in the interval 25 to 140 (RVLAVDDDPV…ELRNIWQHVI (116 aa)). D76 is subject to 4-aspartylphosphate. The interval 161-212 (PPNADSDHVHGHVTCGSPDQSGRPSKKRKEYCSEEEDEGEVNTQDIDDPSAP) is disordered. Residues 193–208 (SEEEDEGEVNTQDIDD) show a composition bias toward acidic residues. Positions 211 to 270 (APKKPRVVWSVELHRKFVAAVNQLGIDKAVPKRILELMNVEKLTRENVASHLQKYRLYLK) form a DNA-binding region, myb-like GARP.

It belongs to the ARR family. Type-B subfamily. Two-component system major event consists of a His-to-Asp phosphorelay between a sensor histidine kinase (HK) and a response regulator (RR). In plants, the His-to-Asp phosphorelay involves an additional intermediate named Histidine-containing phosphotransfer protein (HPt). This multistep phosphorelay consists of a His-Asp-His-Asp sequential transfer of a phosphate group between first a His and an Asp of the HK protein, followed by the transfer to a conserved His of the HPt protein and finally the transfer to an Asp in the receiver domain of the RR protein.

Its subcellular location is the nucleus. In terms of biological role, transcriptional activator that binds specific DNA sequence. Functions as a response regulator involved in His-to-Asp phosphorelay signal transduction system. Phosphorylation of the Asp residue in the receiver domain activates the ability of the protein to promote the transcription of target genes. May directly activate some type-A response regulators in response to cytokinins. This is Two-component response regulator ORR23 from Oryza sativa subsp. japonica (Rice).